We begin with the raw amino-acid sequence, 839 residues long: DNA (cytosine-5)-methyltransferase CMT3 (839 aa).

2 disordered regions span residues 1-38 (MAPKRKRPATKDDTTKSIPKPKKRAPKRAKTVKEEPVT) and 51-86 (LDEPIPESEAKSTWPDRYKPIEVQPPKASSRKKTKD). Over residues 19-30 (PKPKKRAPKRAK) the composition is skewed to basic residues. Residues 51–70 (LDEPIPESEAKSTWPDRYKP) are compositionally biased toward basic and acidic residues. In terms of domain architecture, BAH spans 108 to 227 (QIYELNDDAY…LPYDTFEAIQ (120 aa)). The SAM-dependent MTase C5-type domain maps to 269–813 (ATLLDLYSGC…YALGTAFQGL (545 aa)). The 66-residue stretch at 382-447 (FTVDKIVGIS…LGYKSGILPL (66 aa)) folds into the Chromo domain. Residue cysteine 460 is part of the active site.

The protein belongs to the class I-like SAM-binding methyltransferase superfamily. C5-methyltransferase family. In terms of assembly, homodimer. Interacts with HP1 and, through its chromodomain, with the N-terminal tail of histone H3 doubly methylated at 'Lys-9' and 'Lys-27'. Binds to JMJ24. Post-translationally, ubiquitinated by JMJ24, subsequently beingargeted to proteasomal degradation thus initiating the destabilization of the heterochromatic state of endogenous silenced loci.

It localises to the nucleus. The enzyme catalyses a 2'-deoxycytidine in DNA + S-adenosyl-L-methionine = a 5-methyl-2'-deoxycytidine in DNA + S-adenosyl-L-homocysteine + H(+). Involved in the CpXpG methylation (e.g. CHG cytosine) and in gene silencing. Methylates preferentially transposon-related sequences. Functionally redundant to DRM1/DRM2 to maintain non-CpG methylation. Involved in RNA-directed DNA methylation. In Arabidopsis thaliana (Mouse-ear cress), this protein is DNA (cytosine-5)-methyltransferase CMT3.